The primary structure comprises 358 residues: Isopentenyl-diphosphate delta-isomerase (358 aa).

Residue 12–13 (RK) participates in substrate binding. Residues 69 to 71 (AMT), Ser-99, and Asn-128 each bind FMN. Gln-158 lines the substrate pocket. A Mg(2+)-binding site is contributed by Glu-159. FMN is bound by residues Lys-190, Thr-220, 267–269 (GIR), and 288–289 (AG).

This sequence belongs to the IPP isomerase type 2 family. In terms of assembly, homooctamer. Dimer of tetramers. It depends on FMN as a cofactor. Requires NADPH as cofactor. Mg(2+) is required as a cofactor.

Its subcellular location is the cytoplasm. The enzyme catalyses isopentenyl diphosphate = dimethylallyl diphosphate. Its function is as follows. Involved in the biosynthesis of isoprenoids. Catalyzes the 1,3-allylic rearrangement of the homoallylic substrate isopentenyl (IPP) to its allylic isomer, dimethylallyl diphosphate (DMAPP). The chain is Isopentenyl-diphosphate delta-isomerase from Listeria monocytogenes serovar 1/2a (strain ATCC BAA-679 / EGD-e).